Consider the following 367-residue polypeptide: UDP-N-acetylglucosamine--N-acetylmuramyl-(pentapeptide) pyrophosphoryl-undecaprenol N-acetylglucosamine transferase (367 aa).

Residues 10–12, N124, S196, and Q300 contribute to the UDP-N-acetyl-alpha-D-glucosamine site; that span reads TGG.

It belongs to the glycosyltransferase 28 family. MurG subfamily.

It is found in the cell membrane. The catalysed reaction is di-trans,octa-cis-undecaprenyl diphospho-N-acetyl-alpha-D-muramoyl-L-alanyl-D-glutamyl-meso-2,6-diaminopimeloyl-D-alanyl-D-alanine + UDP-N-acetyl-alpha-D-glucosamine = di-trans,octa-cis-undecaprenyl diphospho-[N-acetyl-alpha-D-glucosaminyl-(1-&gt;4)]-N-acetyl-alpha-D-muramoyl-L-alanyl-D-glutamyl-meso-2,6-diaminopimeloyl-D-alanyl-D-alanine + UDP + H(+). It participates in cell wall biogenesis; peptidoglycan biosynthesis. Functionally, cell wall formation. Catalyzes the transfer of a GlcNAc subunit on undecaprenyl-pyrophosphoryl-MurNAc-pentapeptide (lipid intermediate I) to form undecaprenyl-pyrophosphoryl-MurNAc-(pentapeptide)GlcNAc (lipid intermediate II). The protein is UDP-N-acetylglucosamine--N-acetylmuramyl-(pentapeptide) pyrophosphoryl-undecaprenol N-acetylglucosamine transferase of Natranaerobius thermophilus (strain ATCC BAA-1301 / DSM 18059 / JW/NM-WN-LF).